Reading from the N-terminus, the 461-residue chain is Probable ribonuclease FAU-1 (461 aa).

The region spanning 89–158 is the S1 motif domain; that stretch reads GAVFYGEVTE…ARPSLATALR (70 aa).

The protein belongs to the FAU-1 family.

Functionally, probable RNase involved in rRNA stability through maturation and/or degradation of precursor rRNAs. Binds to RNA in loop regions with AU-rich sequences. This chain is Probable ribonuclease FAU-1, found in Natronomonas pharaonis (strain ATCC 35678 / DSM 2160 / CIP 103997 / JCM 8858 / NBRC 14720 / NCIMB 2260 / Gabara) (Halobacterium pharaonis).